The chain runs to 263 residues: Endonuclease 8 (263 aa).

The active-site Schiff-base intermediate with DNA is P2. E3 functions as the Proton donor in the catalytic mechanism. The active-site Proton donor; for beta-elimination activity is K53. DNA is bound by residues Q70, R125, and N169. An FPG-type zinc finger spans residues K229–K263. R253 acts as the Proton donor; for delta-elimination activity in catalysis.

It belongs to the FPG family. Zn(2+) serves as cofactor.

It catalyses the reaction 2'-deoxyribonucleotide-(2'-deoxyribose 5'-phosphate)-2'-deoxyribonucleotide-DNA = a 3'-end 2'-deoxyribonucleotide-(2,3-dehydro-2,3-deoxyribose 5'-phosphate)-DNA + a 5'-end 5'-phospho-2'-deoxyribonucleoside-DNA + H(+). Functionally, involved in base excision repair of DNA damaged by oxidation or by mutagenic agents. Acts as a DNA glycosylase that recognizes and removes damaged bases. Has a preference for oxidized pyrimidines, such as thymine glycol, 5,6-dihydrouracil and 5,6-dihydrothymine. Has AP (apurinic/apyrimidinic) lyase activity and introduces nicks in the DNA strand. Cleaves the DNA backbone by beta-delta elimination to generate a single-strand break at the site of the removed base with both 3'- and 5'-phosphates. This is Endonuclease 8 from Salmonella typhi.